The following is a 276-amino-acid chain: ATP synthase subunit a (276 aa).

The next 6 helical transmembrane spans lie at 47-67, 107-127, 152-172, 188-208, 226-246, and 247-267; these read WHID…WLFY, IAPL…MDLI, DLNV…FYSI, PFNH…TLIA, LIFI…SVPW, and AIFH…LTIV.

It belongs to the ATPase A chain family. In terms of assembly, F-type ATPases have 2 components, CF(1) - the catalytic core - and CF(0) - the membrane proton channel. CF(1) has five subunits: alpha(3), beta(3), gamma(1), delta(1), epsilon(1). CF(0) has three main subunits: a(1), b(2) and c(9-12). The alpha and beta chains form an alternating ring which encloses part of the gamma chain. CF(1) is attached to CF(0) by a central stalk formed by the gamma and epsilon chains, while a peripheral stalk is formed by the delta and b chains.

The protein resides in the cell inner membrane. Its function is as follows. Key component of the proton channel; it plays a direct role in the translocation of protons across the membrane. This Shewanella halifaxensis (strain HAW-EB4) protein is ATP synthase subunit a.